A 308-amino-acid polypeptide reads, in one-letter code: High-affinity branched-chain amino acid transport system permease protein LivH (308 aa).

Over 1-21 (MSEQFLYFLQQMFNGVTLGST) the chain is Cytoplasmic. A helical membrane pass occupies residues 22-42 (YALIAIGYTMVYGIIGMINFA). Over 43–45 (HGE) the chain is Periplasmic. The helical transmembrane segment at 46–66 (VYMIGSYVSFMIIAALMMMGI) threads the bilayer. Topologically, residues 67–70 (DTSW) are cytoplasmic. The helical transmembrane segment at 71–91 (LLVAAGFIGAIIIASAYGWSI) threads the bilayer. Residues 92–104 (ERVAYRPVRNSKR) lie on the Periplasmic side of the membrane. Residues 105-125 (LIALISAIGMSIFLQNYVSLT) form a helical membrane-spanning segment. Residues 126-154 (EGSRDVALPSLFNGQWIVGSSENFSASIT) lie on the Cytoplasmic side of the membrane. The chain crosses the membrane as a helical span at residues 155–175 (TMQAVIWIVTFLAMLALTIFI). Over 176-203 (RYSRMGRACRACAEDLKMASLLGINTDR) the chain is Periplasmic. A helical transmembrane segment spans residues 204–224 (VIALTFVIGAAMAAVAGVLLG). Residues 225 to 246 (QFYGVINPYIGFMAGMKAFTAA) lie on the Cytoplasmic side of the membrane. Residues 247–266 (VLGGIGSIPGAMIGGLILGV) form a helical membrane-spanning segment. The Periplasmic segment spans residues 267–280 (AEALSSAYLSTEYK). The chain crosses the membrane as a helical span at residues 281 to 301 (DVVSFALLILVLLVMPTGILG). At 302–308 (RPEVEKV) the chain is on the cytoplasmic side.

It belongs to the binding-protein-dependent transport system permease family. LivHM subfamily.

The protein resides in the cell inner membrane. Part of the binding-protein-dependent transport system for branched-chain amino acids. Probably responsible for the translocation of the substrates across the membrane. The chain is High-affinity branched-chain amino acid transport system permease protein LivH (livH) from Salmonella typhimurium (strain LT2 / SGSC1412 / ATCC 700720).